A 290-amino-acid chain; its full sequence is Putative heme oxygenase 3 (290 aa).

Residues 1 to 12 (MSSEVETAEAVD) show a composition bias toward acidic residues. Residues 1–33 (MSSEVETAEAVDESEKNSMASEKENHSKIADFS) are disordered. Basic and acidic residues predominate over residues 13-33 (ESEKNSMASEKENHSKIADFS). HRM repeat units follow at residues 238 to 243 (KCPFNA) and 255 to 260 (NCPFQM).

Belongs to the heme oxygenase family. Found in the spleen, liver, thymus, prostate, heart, kidney, brain and testis.

The catalysed reaction is heme b + 3 reduced [NADPH--hemoprotein reductase] + 3 O2 = biliverdin IXalpha + CO + Fe(2+) + 3 oxidized [NADPH--hemoprotein reductase] + 3 H2O + H(+). Functionally, heme oxygenase cleaves the heme ring at the alpha methene bridge to form biliverdin. Biliverdin is subsequently converted to bilirubin by biliverdin reductase. Heme oxygenase 3 could be implicated in some heme-dependent regulatory role in the cell. The protein is Putative heme oxygenase 3 (Hmox3) of Rattus norvegicus (Rat).